We begin with the raw amino-acid sequence, 323 residues long: Chitin-binding lectin 1 (323 aa).

An N-terminal signal peptide occupies residues 1 to 22 (MKETAISVLALLTLFLLEVVSA). 4-hydroxyproline is present on residues P50, P51, P53, and P55. O-linked (Ara...) hydroxyproline glycosylation is found at P50, P51, P53, and P55. Chitin-binding type-1 domains are found at residues 58-101 (YPQC…QCPG) and 105-149 (EGRC…QCKL). 8 disulfide bridges follow: C61–C77, C70–C83, C76–C90, C95–C99, C108–C125, C117–C131, C124–C138, and C143–C147. Chitin-binding residues include S78, W80, W82, and Y89. The interval 150–210 (PSPPPPPPPP…PPPPPPALPY (61 aa)) is extensin-like. S151 carries an O-linked (Gal) serine glycan. Repeat copies occupy residues 151–159 (SPPPPPPPP), 160–164 (SPPPP), 165–167 (SPP), 168–172 (SPPPP), 173–180 (SPPPPPPP), 181–185 (SPPPP), 186–190 (SPPPP), 191–192 (SP), 193–198 (SPPPPP), and 200–206 (SPPPPPP). Residues 151 to 206 (SPPPPPPPPSPPPPSPPSPPPPSPPPPPPPSPPPPSPPPPSPSPPPPPASPPPPPP) are 10 X approximate repeats of S-P-P-P-P. 4-hydroxyproline occurs at positions 152, 153, 154, 155, 156, 157, 158, and 159. 8 O-linked (Ara...) hydroxyproline glycosylation sites follow: P152, P153, P154, P155, P156, P157, P158, and P159. The segment at 154–203 (PPPPPPSPPPPSPPSPPPPSPPPPPPPSPPPPSPPPPSPSPPPPPASPPP) is disordered. O-linked (Gal) serine glycosylation occurs at S160. 4 positions are modified to 4-hydroxyproline: P161, P162, P163, and P164. O-linked (Ara...) hydroxyproline glycosylation is found at P161, P162, P163, and P164. O-linked (Gal) serine glycosylation is present at S165. 2 positions are modified to 4-hydroxyproline: P166 and P167. O-linked (Ara...) hydroxyproline glycans are attached at residues P166 and P167. S168 carries an O-linked (Gal) serine glycan. Residues P169, P170, P171, and P172 each carry the 4-hydroxyproline modification. O-linked (Ara...) hydroxyproline glycosylation is found at P169, P170, P171, and P172. O-linked (Gal) serine glycosylation occurs at S173. 4-hydroxyproline occurs at positions 174, 175, 176, 177, 178, 179, and 180. P174, P175, P176, P177, P178, P179, and P180 each carry an O-linked (Ara...) hydroxyproline glycan. The O-linked (Gal) serine glycan is linked to S181. A 4-hydroxyproline mark is found at P182, P183, P184, and P185. 4 O-linked (Ara...) hydroxyproline glycosylation sites follow: P182, P183, P184, and P185. S186 carries O-linked (Gal) serine glycosylation. 4-hydroxyproline is present on residues P187, P188, P189, and P190. Residues P187, P188, P189, and P190 are each glycosylated (O-linked (Ara...) hydroxyproline). Residue S191 is glycosylated (O-linked (Gal) serine). A 4-hydroxyproline modification is found at P192. A glycan (O-linked (Ara...) hydroxyproline) is linked at P192. S193 is a glycosylation site (O-linked (Gal) serine). 4-hydroxyproline is present on residues P194, P195, P196, P197, and P198. 5 O-linked (Ara...) hydroxyproline glycosylation sites follow: P194, P195, P196, P197, and P198. An O-linked (Gal) serine glycan is attached at S200. A 4-hydroxyproline mark is found at P201, P202, P203, P204, P205, P206, and P209. O-linked (Ara...) hydroxyproline glycans are attached at residues P201, P202, P203, P204, P205, P206, and P209. Chitin-binding type-1 domains lie at 210–253 (YPQC…QCPG) and 257–301 (EGRC…QCNT). 8 disulfide bridges follow: C213-C229, C222-C235, C228-C242, C247-C251, C260-C277, C269-C283, C276-C290, and C295-C299. Residues S230, W232, W234, and Y241 each coordinate chitin.

This sequence in the central section; belongs to the extensin family. As to quaternary structure, homodimer. In terms of processing, heavily glycosylated with beta-arabinose on hydroxyprolines and with alpha-galactose on serines of the extensin-like domain. As no other sugars could be detected in the native lectin, it is unlikely that the three putative N-glycosylation sites are actually glycosylated. The N-terminus is blocked. The N-terminal sequences proposed in PubMed:9022287 and PubMed:11056399 originate probably from truncated proteins.

In terms of biological role, this protein might function as a defense against chitin containing pathogens. Binds to several branched or linear N-acetyllactosamine-containing glycosphingolipids and also to lactosylceramide with sphingosine and non-hydroxy fatty acids. In Solanum tuberosum (Potato), this protein is Chitin-binding lectin 1.